Consider the following 206-residue polypeptide: Pyridoxine/pyridoxamine 5'-phosphate oxidase (206 aa).

FMN is bound by residues 53 to 58 (RMVLLK), 68 to 69 (YT), K75, and Q97. Residue K58 participates in substrate binding. The substrate site is built by Y115, R119, and S123. Residues 132–133 (QS) and W177 each bind FMN. 183–185 (RLH) is a substrate binding site. R187 contacts FMN.

Belongs to the pyridoxamine 5'-phosphate oxidase family. In terms of assembly, homodimer. It depends on FMN as a cofactor.

The enzyme catalyses pyridoxamine 5'-phosphate + O2 + H2O = pyridoxal 5'-phosphate + H2O2 + NH4(+). It catalyses the reaction pyridoxine 5'-phosphate + O2 = pyridoxal 5'-phosphate + H2O2. It functions in the pathway cofactor metabolism; pyridoxal 5'-phosphate salvage; pyridoxal 5'-phosphate from pyridoxamine 5'-phosphate: step 1/1. It participates in cofactor metabolism; pyridoxal 5'-phosphate salvage; pyridoxal 5'-phosphate from pyridoxine 5'-phosphate: step 1/1. Catalyzes the oxidation of either pyridoxine 5'-phosphate (PNP) or pyridoxamine 5'-phosphate (PMP) into pyridoxal 5'-phosphate (PLP). The sequence is that of Pyridoxine/pyridoxamine 5'-phosphate oxidase from Rhizobium leguminosarum bv. trifolii (strain WSM2304).